The sequence spans 610 residues: MSEIFDAKAFLKTVTSQPGVYRMYDAGGAVIYVGKAKDLKKRLSSYFRSNLASRKTEALVAQIQHIDVTVTHTETEALLLEHNYIKLYQPRYNVLLRDDKSYPFIFLSGDTHPRLAMHRGAKHAKGEYFGPFPNGYAVRETLALLQKIFPVRQCENSVYRNRSRPCLQYQIGRCLGPCVAGLVGEEEYAQQVEYVRLFLSGKDDQVLTQLIARMEKASQDLAFEEAARIRDQIQAVRRVTEKQFVSNAGDDLDVIGVAFDAGMACVHVLFIRQGKVLGSRSYFPKVPGGTELGEVVETFVGQFYLQGSQMRTLPGEILLDFNLSDKTLLADSLSELAGRRIHVQTKPRGDRARYLKLARTNAATALITKLSQQSTITQRLTALAAVLKLPAIKRMECFDISHTMGEQTVASCVVFDANGPLRAEYRRYNIAGITPGDDYAAMNQVLRRRYGKAIEESKIPDVILIDGGKGQLAQAKAVFAELDVPWDKHHPLLLGVAKGADRKAGLETLFFEPEGEGFSLPPDSPALHVIQHIRDESHDHAIGGHRKKRAKVKNTSTLETIEGVGPKRRQMLLKYMGGLQGLRNASVEEIAKVPGISQGLAEKIFWSLKH.

The GIY-YIG domain maps to 16–94; the sequence is SQPGVYRMYD…IKLYQPRYNV (79 aa). Residues 204–239 enclose the UVR domain; it reads DQVLTQLIARMEKASQDLAFEEAARIRDQIQAVRRV.

Belongs to the UvrC family. As to quaternary structure, interacts with UvrB in an incision complex.

It localises to the cytoplasm. Its function is as follows. The UvrABC repair system catalyzes the recognition and processing of DNA lesions. UvrC both incises the 5' and 3' sides of the lesion. The N-terminal half is responsible for the 3' incision and the C-terminal half is responsible for the 5' incision. The sequence is that of UvrABC system protein C from Salmonella heidelberg (strain SL476).